Here is a 60-residue protein sequence, read N- to C-terminus: Putative insect toxin Acra6 (60 aa).

Residues 2–60 (RDGYIRRKDEFKFKCYVDGKDCDDVCKSEGGSAGYCTALGFLCYCAGLPDDKAWKPTSS) enclose the LCN-type CS-alpha/beta domain. Cystine bridges form between cysteine 16–cysteine 37, cysteine 23–cysteine 44, and cysteine 27–cysteine 46.

It belongs to the long (4 C-C) scorpion toxin superfamily. Sodium channel inhibitor family. Beta subfamily. Expressed by the venom gland.

The protein localises to the secreted. Depressant insect toxins cause a transient contraction paralysis followed by a slow flaccid paralysis. They bind voltage-independently to sodium channels (Nav) and block action potentials, primarily by depolarizing the axonal membrane and suppressing the sodium current. In Androctonus crassicauda (Arabian fat-tailed scorpion), this protein is Putative insect toxin Acra6.